Here is a 2191-residue protein sequence, read N- to C-terminus: MGAQVSTQKTGAHETGLSASGNSIIHYTNINYYKDAASNSANRQDFTQDPGKFTEPVKDIMAKTLPALNSPSAEECGYSDRVRSITLGNSTITTQESANVVVGYGVWPDYLKDDEATAEDQPTNPDVATCRFYTLDSVSWMKESQGWWWKFPDALRDMGLFGQNMQYHYLGRSGYTIHVQCNASKFHQGCLLVVCVPEAEMGAATVNEKINREHLSNGEVANTFTGTKSSNTNGVQQAVFNAGMGVRVGNLTVFPHQWINLRTNNCATIVMPYINSVPMDNMFRHYNFTLMIIPFAKLDYAAGSSTYIPITVTVAPMCAEYNGLRLAGHQGLPVMSTPGSNQFLTSDDYQSPTAMPQFDVTPEMHIPGEVKNLMEIAEVDSVVPVNNVNENVNSLEAYRIPVHSVTETGAQVFGFTLQPGADSVMERTLHGEILNYYANWSGSIKLTFMYCGSAMATGKFLLAYSPPGAGVPKNRKEAMLGTHMIWDIGLQSRCVLCVPWISQTHYRFVSKDSYTDAGFITCWYQTSIVVPAEVQNQSVILCFVSACNDFSVRLLRDSPFVTQTAFYQNDVQNAVERSIVRVADTLPSGPSNSESIPALTAAETGHTSQVVPSDTIQTRHVRNFHVRSESSVENFLSRSACVYIVEYKTQDTTPDKMYDSWVINTRQVAQLRRKLEFFTYVRFDVEVTFVITSVQDDSTRQNTDTPVLTHQIMYVPPGGPIPHAVDDYNWQTSTNPSVFWTEGNAPPRMSIPFMSVGNAYSNFYDGWSHFSQTGVYGFNTLNNMGKLYFRHVNDRTISPITSKVRIYFKPKHVKAWVPRPPRLCEYTHKDNVDYEPKGVTTSRTSITITNSKHMETHGAFGQQSGAAYVGNYRVVNRHLATHTDWQNCVWEDYNRDLLVSTTTAHGCDTIARCHCTTGVYFCASRNKHHPVVFEGPGLVEVQESGYYPKRYQSHVLLAAGLSEPGDCGGILRCEHGVIGIVTMGGEGVVGFADVRDLLWLEDDAMEQGVKDYVEQLGNAFGSGFTNQICEQVNLLKESLIGQDSILEKSLKALVKIISALVIVVRNHDDLITVTATLALIGCTSSPWRWLKQKVSQYYGISMAERQNNGWLKKFTEMTNACKGMEWIAIKIQKFIEWLKVKILPEVREKHEFLNRLKQLPLLESQIATIEQSAPSQSDQEQLFSNVQYFAHYCRKYAPLYAAEAKRVFSLEKKMSNYIQFKSKCRIEPVCLLLHGSPGVGKSVATNLIGRSLAEKLNSSIYSLPPDPDHFDGYKQQAVVIMDDLCQNPDGKDVSLFCQMVSSVDFVPPMAALEEKGILFTSPFVLASTNAGSINAPTVSDSRALARRFHFDMNIEVISMYNQNGKINMPMSVKTCDEECCPVNFKKCCPLVCGKAIQFIDRRTQVRYSLDMLVTEMFREYNHRHSVGATLEALFQGPPVYREIKISVAPEIPPPPAIADLLKSVDSEAVRDYCKEKGWLVPEVNSTLQIEKHVSRAFICLQALTTFVSVAGIIYIIYKLFAGFQGAYTGMPNQKPKVPTLRQAKVQGPAFEFAVAMMKRNSSTVKTEYGEFTMLGIYDRWAVLPRHAKPGPTILMNDQEVGVVDAKELVDKDGTNLELTLLKLNRNEKFRDIRGFLAKEEVEVNEAVLAINTSKFPNMYIPVGQVTDYGFLNLGGTPTKRMLMYNFPTRAGQCGGVLMSTGKVLGIHVGGNGHQGFSAALLKHYFNDEQGEIEFIESSKDAGYPVINTPSRTKLEPSVFHQVFEGSKEPAVLRNGDPRLKANFEEAIFSKYIGNVNTHVDEYMLEAIDHYAGQLATLDISTEPMKLEDAVYGTEGLEALDLTTSAGYPYVALGIKKRDILSKKTRDLTKLKECMDKYGLNLPMVTYVKDELRSAEKVAKGKSRLIEASSLNDSVAMRQTFGNLYKAFHQNPGIVTGSAVGCDPDLFWSKIPVMLDGHLIAFDYSGYDASLSPVWFACLKLLLEKLGYTHKETNYIDYLCNSHHLYRDKHYFVRGGMPSGCSGTSIFNSMINNIIIRTLMLKVYKGIDLDQFRMIAYGDDVIASYPWPIDASLLAEAGKDYGLIMTPADKGECFNEVTWTNVTFLKRYFRADEQYPFLVHPVMPMKDIHESIRWTKDPKNTQDHVRSLCLLAWHNGEQEYEEFIQKIRSVPVGRCLTLPAFSTLRRKWLDSF.

A lipid anchor (N-myristoyl glycine; by host) is attached at glycine 2. Residues 2–1501 (GAQVSTQKTG…HVSRAFICLQ (1500 aa)) are Cytoplasmic-facing. An amphipathic alpha-helix region spans residues 566–582 (FYQNDVQNAVERSIVRV). Residues histidine 878 and aspartate 896 each act as for protease 2A activity in the active site. Zn(2+) contacts are provided by cysteine 913 and cysteine 915. The active-site For protease 2A activity is the cysteine 967. Cysteine 973 and histidine 975 together coordinate Zn(2+). Residues 1107–1179 (NNGWLKKFTE…EQSAPSQSDQ (73 aa)) are membrane-binding. Residues 1107–1245 (NNGWLKKFTE…SPGVGKSVAT (139 aa)) are oligomerization. An RNA-binding region spans residues 1128-1132 (AIKIQ). The 157-residue stretch at 1211–1367 (EKKMSNYIQF…SMYNQNGKIN (157 aa)) folds into the SF3 helicase domain. 3 residues coordinate Zn(2+): cysteine 1375, cysteine 1387, and cysteine 1392. The segment at 1375 to 1392 (CDEECCPVNFKKCCPLVC) adopts a C4-type; degenerate zinc-finger fold. An RNA-binding region spans residues 1419–1426 (EYNHRHSV). Residues 1430–1435 (LEALFQ) are oligomerization. Residues 1502–1517 (ALTTFVSVAGIIYIIY) lie within the membrane without spanning it. Over 1518-2191 (KLFAGFQGAY…TLRRKWLDSF (674 aa)) the chain is Cytoplasmic. Tyrosine 1527 is subject to O-(5'-phospho-RNA)-tyrosine. One can recognise a Peptidase C3 domain in the interval 1547–1725 (GPAFEFAVAM…FSAALLKHYF (179 aa)). Active-site for protease 3C activity residues include histidine 1586, glutamate 1617, and cysteine 1693. The region spanning 1956-2072 (GHLIAFDYSG…SYPWPIDASL (117 aa)) is the RdRp catalytic domain. Mg(2+) is bound by residues aspartate 1962 and aspartate 2058.

Belongs to the picornaviruses polyprotein family. As to quaternary structure, interacts with capsid protein VP1 and capsid protein VP3 to form heterotrimeric protomers. Interacts with capsid protein VP0, and capsid protein VP3 to form heterotrimeric protomers. Five protomers subsequently associate to form pentamers which serve as building blocks for the capsid. Interacts with capsid protein VP2, capsid protein VP3 and capsid protein VP4 following cleavage of capsid protein VP0. Interacts with host CD55 and FCGRT; these interactions promote virus attachment to the host cell and subsequent internalization. In terms of assembly, interacts with capsid protein VP1 and capsid protein VP3 in the mature capsid. Interacts with host CD55 and FCGRT; these interactions promote virus attachment to the host cell and subsequent internalization. As to quaternary structure, interacts with capsid protein VP0 and capsid protein VP1 to form heterotrimeric protomers. Five protomers subsequently associate to form pentamers which serve as building blocks for the capsid. Interacts with capsid protein VP4 in the mature capsid. Interacts with protein 2C; this interaction may be important for virion morphogenesis. Interacts with host FCGRT; this interaction promotes virus attachment to the host cell and subsequent internalization. Interacts with capsid protein VP1 and capsid protein VP3. In terms of assembly, homodimer. As to quaternary structure, homohexamer; forms a hexameric ring structure with 6-fold symmetry characteristic of AAA+ ATPases. Interacts (via N-terminus) with host RTN3 (via reticulon domain); this interaction is important for viral replication. Interacts with capsid protein VP3; this interaction may be important for virion morphogenesis. Interacts with protein 3CD. In terms of assembly, homodimer. Interacts with host GBF1. Interacts (via GOLD domain) with host ACBD3 (via GOLD domain); this interaction allows the formation of a viral protein 3A/ACBD3 heterotetramer with a 2:2 stoichiometry, which will stimulate the recruitment of host PI4KB in order to synthesize PI4P at the viral RNA replication sites. As to quaternary structure, interacts with RNA-directed RNA polymerase. Interacts with protein 3AB and with RNA-directed RNA polymerase. In terms of assembly, interacts with Viral protein genome-linked and with protein 3CD. Requires Mg(2+) as cofactor. In terms of processing, specific enzymatic cleavages in vivo by the viral proteases yield processing intermediates and the mature proteins. Myristoylation is required for the formation of pentamers during virus assembly. Further assembly of 12 pentamers and a molecule of genomic RNA generates the provirion. Post-translationally, during virion maturation, immature virions are rendered infectious following cleavage of VP0 into VP4 and VP2. This maturation seems to be an autocatalytic event triggered by the presence of RNA in the capsid and it is followed by a conformational change infectious virion. In terms of processing, myristoylation is required during RNA encapsidation and formation of the mature virus particle. VPg is uridylylated by the polymerase into VPg-pUpU. This acts as a nucleotide-peptide primer for the genomic RNA replication.

Its subcellular location is the virion. The protein resides in the host cytoplasm. It localises to the host cytoplasmic vesicle membrane. It is found in the host nucleus. The catalysed reaction is a ribonucleoside 5'-triphosphate + H2O = a ribonucleoside 5'-diphosphate + phosphate + H(+). It carries out the reaction Selective cleavage of Tyr-|-Gly bond in the picornavirus polyprotein.. The enzyme catalyses RNA(n) + a ribonucleoside 5'-triphosphate = RNA(n+1) + diphosphate. It catalyses the reaction Selective cleavage of Gln-|-Gly bond in the poliovirus polyprotein. In other picornavirus reactions Glu may be substituted for Gln, and Ser or Thr for Gly.. With respect to regulation, replication or transcription is subject to high level of random mutations by the nucleotide analog ribavirin. Its function is as follows. Forms an icosahedral capsid of pseudo T=3 symmetry with capsid proteins VP2 and VP3. The capsid is 300 Angstroms in diameter, composed of 60 copies of each capsid protein and enclosing the viral positive strand RNA genome. Capsid protein VP1 mainly forms the vertices of the capsid. Capsid protein VP1 interacts with host cell receptor to provide virion attachment to target host cells. This attachment induces virion internalization. Tyrosine kinases are probably involved in the entry process. After binding to its receptor, the capsid undergoes conformational changes. Capsid protein VP1 N-terminus (that contains an amphipathic alpha-helix) and capsid protein VP4 are externalized. Together, they shape a pore in the host membrane through which viral genome is translocated to host cell cytoplasm. In terms of biological role, forms an icosahedral capsid of pseudo T=3 symmetry with capsid proteins VP2 and VP3. The capsid is 300 Angstroms in diameter, composed of 60 copies of each capsid protein and enclosing the viral positive strand RNA genome. Lies on the inner surface of the capsid shell. After binding to the host receptor, the capsid undergoes conformational changes. Capsid protein VP4 is released, Capsid protein VP1 N-terminus is externalized, and together, they shape a pore in the host membrane through which the viral genome is translocated into the host cell cytoplasm. Functionally, component of immature procapsids, which is cleaved into capsid proteins VP4 and VP2 after maturation. Allows the capsid to remain inactive before the maturation step. Its function is as follows. Cysteine protease that cleaves viral polyprotein and specific host proteins. It is responsible for the autocatalytic cleavage between the P1 and P2 regions, which is the first cleavage occurring in the polyprotein. Also cleaves the host translation initiation factor EIF4G1, in order to shut down the capped cellular mRNA translation. Inhibits the host nucleus-cytoplasm protein and RNA trafficking by cleaving host members of the nuclear pores. Counteracts stress granule formation probably by antagonizing its assembly or promoting its dissassembly. In terms of biological role, plays an essential role in the virus replication cycle by acting as a viroporin. Creates a pore in the host endoplasmic reticulum and as a consequence releases Ca2+ in the cytoplasm of infected cell. In turn, high levels of cytoplasmic calcium may trigger membrane trafficking and transport of viral ER-associated proteins to viroplasms, sites of viral genome replication. Induces and associates with structural rearrangements of intracellular membranes. Displays RNA-binding, nucleotide binding and NTPase activities. May play a role in virion morphogenesis and viral RNA encapsidation by interacting with the capsid protein VP3. Functionally, localizes the viral replication complex to the surface of membranous vesicles. Together with protein 3CD binds the Cis-Active RNA Element (CRE) which is involved in RNA synthesis initiation. Acts as a cofactor to stimulate the activity of 3D polymerase, maybe through a nucleid acid chaperone activity. Its function is as follows. Localizes the viral replication complex to the surface of membranous vesicles. It inhibits host cell endoplasmic reticulum-to-Golgi apparatus transport and causes the disassembly of the Golgi complex, possibly through GBF1 interaction. This would result in depletion of MHC, trail receptors and IFN receptors at the host cell surface. Plays an essential role in viral RNA replication by recruiting ACBD3 and PI4KB at the viral replication sites, thereby allowing the formation of the rearranged membranous structures where viral replication takes place. In terms of biological role, acts as a primer for viral RNA replication and remains covalently bound to viral genomic RNA. VPg is uridylylated prior to priming replication into VPg-pUpU. The oriI viral genomic sequence may act as a template for this. The VPg-pUpU is then used as primer on the genomic RNA poly(A) by the RNA-dependent RNA polymerase to replicate the viral genome. During genome replication, the VPg-RNA linkage is removed by the host TDP2, thereby accelerating replication. During the late stage of the replication cycle, host TDP2 is excluded from sites of viral RNA synthesis and encapsidation, allowing for the generation of progeny virions. Involved in the viral replication complex and viral polypeptide maturation. It exhibits protease activity with a specificity and catalytic efficiency that is different from protease 3C. Protein 3CD binds to the 5'UTR of the viral genome. Functionally, replicates the viral genomic RNA on the surface of intracellular membranes. May form linear arrays of subunits that propagate along a strong head-to-tail interaction called interface-I. Covalently attaches UMP to a tyrosine of VPg, which is used to prime RNA synthesis. The positive stranded RNA genome is first replicated at virus induced membranous vesicles, creating a dsRNA genomic replication form. This dsRNA is then used as template to synthesize positive stranded RNA genomes. ss(+)RNA genomes are either translated, replicated or encapsidated. Its function is as follows. Major viral protease that mediates proteolytic processing of the polyprotein. Cleaves host EIF5B, contributing to host translation shutoff. Also cleaves host PABPC1, contributing to host translation shutoff. Cleaves host NLRP1, triggers host N-glycine-mediated degradation of the autoinhibitory NLRP1 N-terminal fragment. This chain is Genome polyprotein, found in Echovirus 6 (strain Charles).